A 143-amino-acid polypeptide reads, in one-letter code: Small ribosomal subunit protein uS12 (143 aa).

A compositionally biased stretch (basic residues) spans M1–Q20. Residues M1–D26 form a disordered region. Hydroxyproline is present on P62.

It belongs to the universal ribosomal protein uS12 family. In terms of assembly, component of the 40S small ribosomal subunit.

The protein resides in the cytoplasm. It localises to the cytosol. The protein localises to the rough endoplasmic reticulum. The chain is Small ribosomal subunit protein uS12 (RpS23) from Dermacentor variabilis (American dog tick).